The primary structure comprises 133 residues: Arsenate reductase 1 (133 aa).

Catalysis depends on nucleophile residues cysteine 10, cysteine 82, and cysteine 89. Cystine bridges form between cysteine 10/cysteine 82 and cysteine 82/cysteine 89.

Belongs to the low molecular weight phosphotyrosine protein phosphatase family. Thioredoxin-coupled ArsC subfamily.

The protein resides in the cytoplasm. The enzyme catalyses arsenate + [thioredoxin]-dithiol + H(+) = arsenite + [thioredoxin]-disulfide + H2O. Its function is as follows. Catalyzes the reduction of arsenate [As(V)] to arsenite [As(III)]. This is Arsenate reductase 1 from Staphylococcus haemolyticus (strain JCSC1435).